The primary structure comprises 309 residues: Olfactory receptor 5H2 (309 aa).

The Extracellular segment spans residues 1–28; that stretch reads MEQDNTTLLTEFVLTGLTYQPEWKMPLF. Asparagine 5 is a glycosylation site (N-linked (GlcNAc...) asparagine). The chain crosses the membrane as a helical span at residues 29-49; the sequence is LVFLVIYLITIVWNLGLIALI. Residues 50 to 56 lie on the Cytoplasmic side of the membrane; sequence WNDPQLH. A helical transmembrane segment spans residues 57 to 77; sequence IPMYFFLGSLAFVDAWISSTV. The Extracellular segment spans residues 78–97; it reads TPKMLVNFLAKNRMISLSEC. The cysteines at positions 97 and 179 are disulfide-linked. Residues 98 to 118 traverse the membrane as a helical segment; it reads MIQFFSFAFGGTTECFLLATM. At 119-143 the chain is on the cytoplasmic side; the sequence is AYDRYVAICKPLLYPVIMNNSLCIR. Residues 144 to 164 form a helical membrane-spanning segment; the sequence is LLAFSFLGGFLHALIHEVLIF. Residues 165 to 193 are Extracellular-facing; that stretch reads RLTFCNSNIIHHFYCDIIPLFMISCTDPS. The helical transmembrane segment at 194–214 threads the bilayer; that stretch reads INFLMVFILSGSIQVFTIVTV. Residues 215 to 239 lie on the Cytoplasmic side of the membrane; that stretch reads LNSYTFALFTILKKKSVRGVRKAFS. The chain crosses the membrane as a helical span at residues 240-260; that stretch reads TCGAHLLSVSLYYGPLIFMYL. Topologically, residues 261-271 are extracellular; it reads RPASPQADDQD. A helical membrane pass occupies residues 272 to 292; it reads MIDSVFYTIIIPLLNPIIYSL. Over 293–309 the chain is Cytoplasmic; the sequence is RNKQVIDSFTKMVKRNV.

It belongs to the G-protein coupled receptor 1 family.

Its subcellular location is the cell membrane. Functionally, odorant receptor. The polypeptide is Olfactory receptor 5H2 (OR5H2) (Homo sapiens (Human)).